The following is a 370-amino-acid chain: Putative agmatine deiminase (370 aa).

Cys361 functions as the Amidino-cysteine intermediate in the catalytic mechanism.

This sequence belongs to the agmatine deiminase family.

The enzyme catalyses agmatine + H2O = N-carbamoylputrescine + NH4(+). The sequence is that of Putative agmatine deiminase from Shewanella baltica (strain OS195).